The primary structure comprises 230 residues: Ribonuclease 3 (230 aa).

An RNase III domain is found at 10–133 (DPRLLSRIGY…IIGAIYLDSS (124 aa)). A Mg(2+)-binding site is contributed by E46. Residue D50 is part of the active site. Mg(2+)-binding residues include D119 and E122. The active site involves E122. Positions 161-230 (DPKSRLQEYL…AAEILKLLEQ (70 aa)) constitute a DRBM domain.

It belongs to the ribonuclease III family. Homodimer. It depends on Mg(2+) as a cofactor.

The protein resides in the cytoplasm. It carries out the reaction Endonucleolytic cleavage to 5'-phosphomonoester.. Digests double-stranded RNA. Involved in the processing of primary rRNA transcript to yield the immediate precursors to the large and small rRNAs (23S and 16S). Processes some mRNAs, and tRNAs when they are encoded in the rRNA operon. Processes pre-crRNA and tracrRNA of type II CRISPR loci if present in the organism. This chain is Ribonuclease 3, found in Acinetobacter baumannii (strain SDF).